The chain runs to 90 residues: Kunitz-type serine protease inhibitor C5 (90 aa).

The first 24 residues, 1 to 24 (MSSGGLLLLLALLTLWAELTPISG), serve as a signal peptide directing secretion. The 51-residue stretch at 31 to 81 (CNLAPESGRCRGHLRRIYYNPDSNKCEVFFYGGCGGNDNNFETRKKCRQTC) folds into the BPTI/Kunitz inhibitor domain. 3 disulfide bridges follow: Cys31/Cys81, Cys40/Cys64, and Cys56/Cys77. Residues 85-90 (RKGRPT) constitute a propeptide that is removed on maturation.

The protein belongs to the venom Kunitz-type family. Expressed by the venom gland.

The protein resides in the secreted. In terms of biological role, serine protease inhibitor that inhibits trypsin. The protein is Kunitz-type serine protease inhibitor C5 of Daboia siamensis (Eastern Russel's viper).